The primary structure comprises 194 residues: Transcriptional repressor NrdR (194 aa).

A zinc finger lies at 3-33 (CPFCGHADDRVLDTRVQKDGSIRRRRECLEC). The 91-residue stretch at 48 to 138 (PFIIKKDGRR…VYRTFKDVQE (91 aa)) folds into the ATP-cone domain. The segment covering 168–179 (ESEKSTNHETDS) has biased composition (basic and acidic residues). Positions 168–194 (ESEKSTNHETDSKTPSPRTRPPGPLSN) are disordered. The segment covering 185–194 (RTRPPGPLSN) has biased composition (pro residues).

It belongs to the NrdR family. Requires Zn(2+) as cofactor.

Negatively regulates transcription of bacterial ribonucleotide reductase nrd genes and operons by binding to NrdR-boxes. The protein is Transcriptional repressor NrdR of Bdellovibrio bacteriovorus (strain ATCC 15356 / DSM 50701 / NCIMB 9529 / HD100).